Reading from the N-terminus, the 452-residue chain is Prephenate dehydrogenase [NADP(+)] (452 aa).

NADP(+) is bound at residue 14-43; that stretch reads KVIGIIGLGDMGLLYANKFTDAGWGVICCD. The 284-residue stretch at 14-297 folds into the Prephenate/arogenate dehydrogenase domain; that stretch reads KVIGIIGLGD…GKHTGLLLLD (284 aa).

This sequence belongs to the prephenate/arogenate dehydrogenase family.

It carries out the reaction prephenate + NADP(+) = 3-(4-hydroxyphenyl)pyruvate + CO2 + NADPH. The protein operates within amino-acid biosynthesis; L-tyrosine biosynthesis; (4-hydroxyphenyl)pyruvate from prephenate (NADP(+) route): step 1/1. The protein is Prephenate dehydrogenase [NADP(+)] (TYR1) of Saccharomyces cerevisiae (strain ATCC 204508 / S288c) (Baker's yeast).